The chain runs to 56 residues: Keratin-associated protein 20-1 (56 aa).

It belongs to the KRTAP type 20 family. Interacts with hair keratins.

In the hair cortex, hair keratin intermediate filaments are embedded in an interfilamentous matrix, consisting of hair keratin-associated proteins (KRTAP), which are essential for the formation of a rigid and resistant hair shaft through their extensive disulfide bond cross-linking with abundant cysteine residues of hair keratins. The matrix proteins include the high-sulfur and high-glycine-tyrosine keratins. The polypeptide is Keratin-associated protein 20-1 (KRTAP20-1) (Homo sapiens (Human)).